Reading from the N-terminus, the 124-residue chain is Large ribosomal subunit protein bL21 (124 aa).

The tract at residues Thr105 to Ala124 is disordered. The span at Ala115–Ala124 shows a compositional bias: low complexity.

It belongs to the bacterial ribosomal protein bL21 family. As to quaternary structure, part of the 50S ribosomal subunit. Contacts protein L20.

Its function is as follows. This protein binds to 23S rRNA in the presence of protein L20. This is Large ribosomal subunit protein bL21 from Xanthobacter autotrophicus (strain ATCC BAA-1158 / Py2).